A 382-amino-acid polypeptide reads, in one-letter code: Putative 12-oxophytodienoate reductase 3 (382 aa).

FMN is bound by residues 37–39 (PLT), Ala-70, and Gln-112. Positions 120 to 138 (STNDQQPNGQAPISSTDKQ) are enriched in polar residues. Residues 120–147 (STNDQQPNGQAPISSTDKQITPDDSHTV) form a disordered region. 184 to 187 (HGAH) provides a ligand contact to substrate. Tyr-189 serves as the catalytic Proton donor. Residue Arg-236 participates in FMN binding. A substrate-binding site is contributed by Arg-277. Residues Gly-307 and 328–329 (GR) contribute to the FMN site.

The protein belongs to the NADH:flavin oxidoreductase/NADH oxidase family. Requires FMN as cofactor.

Its function is as follows. Putative oxophytodienoate reductase that may be involved in the biosynthesis or metabolism of oxylipin signaling molecules. The protein is Putative 12-oxophytodienoate reductase 3 (OPR3) of Oryza sativa subsp. japonica (Rice).